Reading from the N-terminus, the 498-residue chain is MTDKTQAAGLSSDATEVRSQKLDLLRQQIGDVYPAHFHRTLTNAELAEKYAGLEPDTESGETVTVAGRVFSSRNSGMFMDLHDASGKIQIFSHKDTAPEEARALLPMIDLGDIIGVTGEVRRTKRGELTVNAKEITMLCKSLLPMPEKYHGLADIETRYRKRYLDIMVNEESKLRFQQRSRIVSSLRRFLEDEGFMEVETPMLQPIYGGATAEPFKTHHNTLKLDMYLRIAPELYLKRILVSGLTDKVFEINRNFRNEGVSTRHNPEFTMMECYWAYADYEDVMGLVERMFETLALAVHGKTEFEFGDKQLSFKGPFPRVSMPAAVKDATGIDFLALKSDEEARQAARDAGVEIEKDATWGEVLAFLFEEKVEATLIQPAHVIHFPKDISPFAKEVPGEPRLVERFETYCNGWEIGNAFSELNDPVEQRARMVEQMEQAHARGEKEKTLDEDFLDAMDQGMPPAGGLGIGVDRLIMLLTNSPSIRDIILFPARRQKAD.

Mg(2+)-binding residues include E407 and E414.

This sequence belongs to the class-II aminoacyl-tRNA synthetase family. In terms of assembly, homodimer. It depends on Mg(2+) as a cofactor.

Its subcellular location is the cytoplasm. The enzyme catalyses tRNA(Lys) + L-lysine + ATP = L-lysyl-tRNA(Lys) + AMP + diphosphate. This is Lysine--tRNA ligase (lysS) from Rhizobium meliloti (strain 1021) (Ensifer meliloti).